We begin with the raw amino-acid sequence, 202 residues long: LexA repressor (202 aa).

The H-T-H motif DNA-binding region spans 28-48; the sequence is RAEIAQRLGFRSPNAAEEHLK. Catalysis depends on for autocatalytic cleavage activity residues Ser-119 and Lys-156.

Belongs to the peptidase S24 family. In terms of assembly, homodimer.

It catalyses the reaction Hydrolysis of Ala-|-Gly bond in repressor LexA.. In terms of biological role, represses a number of genes involved in the response to DNA damage (SOS response), including recA and lexA. Binds to the 16 bp palindromic sequence 5'-CTGTATATATATACAG-3'. In the presence of single-stranded DNA, RecA interacts with LexA causing an autocatalytic cleavage which disrupts the DNA-binding part of LexA, leading to derepression of the SOS regulon and eventually DNA repair. This chain is LexA repressor, found in Klebsiella pneumoniae (strain 342).